Reading from the N-terminus, the 234-residue chain is tRNA1(Val) (adenine(37)-N6)-methyltransferase (234 aa).

Belongs to the methyltransferase superfamily. tRNA (adenine-N(6)-)-methyltransferase family.

The protein localises to the cytoplasm. The enzyme catalyses adenosine(37) in tRNA1(Val) + S-adenosyl-L-methionine = N(6)-methyladenosine(37) in tRNA1(Val) + S-adenosyl-L-homocysteine + H(+). In terms of biological role, specifically methylates the adenine in position 37 of tRNA(1)(Val) (anticodon cmo5UAC). The chain is tRNA1(Val) (adenine(37)-N6)-methyltransferase from Aliivibrio fischeri (strain ATCC 700601 / ES114) (Vibrio fischeri).